The following is a 435-amino-acid chain: Nematode resistance protein-like HSPRO2 (435 aa).

Interacts with SNF4.

Its subcellular location is the cytoplasm. Its function is as follows. Positive regulator of basal resistance. The polypeptide is Nematode resistance protein-like HSPRO2 (HSPRO2) (Arabidopsis thaliana (Mouse-ear cress)).